Consider the following 58-residue polypeptide: Bestoxin (58 aa).

An LCN-type CS-alpha/beta domain is found at 3–58; the sequence is VPGNYPLDKDGNTYTCLELGENKDCQKVCKLHGVQYGYCYAFSCWCKEYLDDKDSV. 3 cysteine pairs are disulfide-bonded: C18/C41, C27/C46, and C31/C48.

As to expression, expressed by the venom gland.

The protein resides in the secreted. In terms of biological role, beta toxins bind voltage-independently at site-4 of sodium channels (Nav) and shift the voltage of activation toward more negative potentials thereby affecting sodium channel activation and promoting spontaneous and repetitive firing. In mice, causes intense writhing. The protein is Bestoxin of Parabuthus transvaalicus (Transvaal thick-tailed scorpion).